Here is a 155-residue protein sequence, read N- to C-terminus: Ribonuclease H (155 aa).

The RNase H type-1 domain maps to 1–142 (MLKQVEIFTD…CDELARAAAS (142 aa)). 4 residues coordinate Mg(2+): D10, E48, D70, and D134.

The protein belongs to the RNase H family. Monomer. The cofactor is Mg(2+).

It is found in the cytoplasm. The catalysed reaction is Endonucleolytic cleavage to 5'-phosphomonoester.. Functionally, endonuclease that specifically degrades the RNA of RNA-DNA hybrids. This Klebsiella pneumoniae subsp. pneumoniae (strain ATCC 700721 / MGH 78578) protein is Ribonuclease H.